The primary structure comprises 97 residues: MAVMLKPWTVVATVLICVLLCLGTFVDAYPPKPENPGDDAAPEELAKYYTALRHYINLITRQRYGKRSTSEDVMAELLFGDDTEHKQRSRYDDSFMW.

Positions 1 to 28 are cleaved as a signal peptide; sequence MAVMLKPWTVVATVLICVLLCLGTFVDA. Residue Y64 is modified to Tyrosine amide. The propeptide at 68–97 is C-terminal extension; sequence STSEDVMAELLFGDDTEHKQRSRYDDSFMW.

This sequence belongs to the NPY family. In terms of tissue distribution, mainly expressed in brainstem neurons, and in the telencephalon. Also expressed in intestinal endocrine cells.

The protein localises to the secreted. This is Peptide YY-A (pyya) from Danio rerio (Zebrafish).